Consider the following 238-residue polypeptide: Transcriptional activator HAC1 (238 aa).

The disordered stretch occupies residues Met-1–Glu-39. A compositionally biased stretch (polar residues) spans Glu-7–Ser-24. The bZIP domain maps to Glu-39–Ala-102. The interval Arg-41–Arg-61 is basic motif. Residues Leu-67–Leu-74 form a leucine-zipper region. A disordered region spans residues Gly-115–Asp-152. Residues Ser-117 to Ser-134 show a composition bias toward low complexity.

The protein belongs to the bZIP family. As to quaternary structure, homodimer.

The protein resides in the nucleus. Transcriptional activator involved in the unfolded protein response (UPR) pathway. Recognizes and binds to the UPR element (UPRE) in the promoter of UPR-regulated genes such as KAR2, PDI1, EUG1 and FKB2. Increases the synthesis of endoplasmic reticulum-resident proteins required for protein folding as well as components of the secretory pathway. The protein is Transcriptional activator HAC1 (HAC1) of Saccharomyces cerevisiae (strain ATCC 204508 / S288c) (Baker's yeast).